The chain runs to 247 residues: NH(3)-dependent NAD(+) synthetase (247 aa).

29–36 (GLSGGVDS) provides a ligand contact to ATP. Aspartate 35 is a binding site for Mg(2+). Arginine 112 provides a ligand contact to deamido-NAD(+). Threonine 132 serves as a coordination point for ATP. Residue glutamate 137 coordinates Mg(2+). Lysine 145 and aspartate 152 together coordinate deamido-NAD(+). 2 residues coordinate ATP: lysine 161 and serine 183. 233–234 (HK) lines the deamido-NAD(+) pocket.

The protein belongs to the NAD synthetase family. In terms of assembly, homodimer.

It carries out the reaction deamido-NAD(+) + NH4(+) + ATP = AMP + diphosphate + NAD(+) + H(+). It functions in the pathway cofactor biosynthesis; NAD(+) biosynthesis; NAD(+) from deamido-NAD(+) (ammonia route): step 1/1. Catalyzes the ATP-dependent amidation of deamido-NAD to form NAD. Uses ammonia as a nitrogen source. In Archaeoglobus fulgidus (strain ATCC 49558 / DSM 4304 / JCM 9628 / NBRC 100126 / VC-16), this protein is NH(3)-dependent NAD(+) synthetase.